Here is a 445-residue protein sequence, read N- to C-terminus: MSNRKYFGTDGIRGRVGDAPITPEFVLKLGWAAGKVLARHGSRKIIIGKDTRISGYMLESALEAGLAAAGLSASFTGPMPTPAIAYLTRAFRAEAGIVISASHNPFYDNGIKFFSIEGTKLPDDVEEAIEAEMEKELTCVDSAELGKASRIVDAAGRYIEFCKGTFPNELSLGTLKVVVDCAHGATYHIAPNVFRELGAQVIAMGCEPDGLNINEEVGATDVRALQARVLAEKADLGIAYDGDGDRVIMVDHEGNKVDGDQILYIIAREGLRQGQLRGGAVGTLMSNMGLELALKQLGIPFARAKVGDRYVLEMLQEKGWRIGAENSGHVILLDKTTTGDGIVASLQVVAAMVRNHMSLHDLCSGMKMFPQLLVNVRFTEGSGNPLENEHVKAVTAEVEAALGKRGRVLLRKSGTEPLIRVMVEGEHEDQVHEFAHRIAEAVKSV.

The active-site Phosphoserine intermediate is the S102. Positions 102, 241, 243, and 245 each coordinate Mg(2+). S102 carries the post-translational modification Phosphoserine.

This sequence belongs to the phosphohexose mutase family. The cofactor is Mg(2+). Activated by phosphorylation.

It catalyses the reaction alpha-D-glucosamine 1-phosphate = D-glucosamine 6-phosphate. Catalyzes the conversion of glucosamine-6-phosphate to glucosamine-1-phosphate. This is Phosphoglucosamine mutase from Klebsiella pneumoniae (strain 342).